A 129-amino-acid polypeptide reads, in one-letter code: UPF0102 protein Mnod_0024 (129 aa).

Belongs to the UPF0102 family.

This Methylobacterium nodulans (strain LMG 21967 / CNCM I-2342 / ORS 2060) protein is UPF0102 protein Mnod_0024.